Consider the following 122-residue polypeptide: Large ribosomal subunit protein uL14 (122 aa).

The protein belongs to the universal ribosomal protein uL14 family. In terms of assembly, part of the 50S ribosomal subunit. Forms a cluster with proteins L3 and L19. In the 70S ribosome, L14 and L19 interact and together make contacts with the 16S rRNA in bridges B5 and B8.

Its function is as follows. Binds to 23S rRNA. Forms part of two intersubunit bridges in the 70S ribosome. This chain is Large ribosomal subunit protein uL14, found in Brevibacillus brevis (strain 47 / JCM 6285 / NBRC 100599).